The sequence spans 396 residues: uncharacterized protein (396 aa).

This sequence belongs to the NAD(P)-dependent epimerase/dehydratase family. NAD(+) is required as a cofactor. Requires NADP(+) as cofactor.

Its function is as follows. Putative nucleotide sugar epimerase/dehydrogenase. This is an uncharacterized protein from Sinorhizobium fredii (strain NBRC 101917 / NGR234).